We begin with the raw amino-acid sequence, 270 residues long: Formamidopyrimidine-DNA glycosylase (270 aa).

Pro2 acts as the Schiff-base intermediate with DNA in catalysis. Residue Glu3 is the Proton donor of the active site. Catalysis depends on Lys57, which acts as the Proton donor; for beta-elimination activity. His90, Arg109, and Lys150 together coordinate DNA. The FPG-type zinc-finger motif lies at 235–269 (QIYGKKGCPCPKCGQKIESFTVGQRNSYVCLHCQK). Arg259 acts as the Proton donor; for delta-elimination activity in catalysis.

This sequence belongs to the FPG family. In terms of assembly, monomer. Zn(2+) serves as cofactor.

It carries out the reaction Hydrolysis of DNA containing ring-opened 7-methylguanine residues, releasing 2,6-diamino-4-hydroxy-5-(N-methyl)formamidopyrimidine.. The catalysed reaction is 2'-deoxyribonucleotide-(2'-deoxyribose 5'-phosphate)-2'-deoxyribonucleotide-DNA = a 3'-end 2'-deoxyribonucleotide-(2,3-dehydro-2,3-deoxyribose 5'-phosphate)-DNA + a 5'-end 5'-phospho-2'-deoxyribonucleoside-DNA + H(+). Involved in base excision repair of DNA damaged by oxidation or by mutagenic agents. Acts as a DNA glycosylase that recognizes and removes damaged bases. Has a preference for oxidized purines, such as 7,8-dihydro-8-oxoguanine (8-oxoG). Has AP (apurinic/apyrimidinic) lyase activity and introduces nicks in the DNA strand. Cleaves the DNA backbone by beta-delta elimination to generate a single-strand break at the site of the removed base with both 3'- and 5'-phosphates. The polypeptide is Formamidopyrimidine-DNA glycosylase (Actinobacillus succinogenes (strain ATCC 55618 / DSM 22257 / CCUG 43843 / 130Z)).